Reading from the N-terminus, the 35-residue chain is Cecropin (35 aa).

Isoleucine 35 carries the post-translational modification Isoleucine amide.

It belongs to the cecropin family.

Its subcellular location is the secreted. In terms of biological role, cecropins have lytic and antibacterial activity against several Gram-positive and Gram-negative bacteria. This chain is Cecropin, found in Bombyx mori (Silk moth).